The sequence spans 538 residues: Putative cysteine ligase BshC (538 aa).

Positions Leu-462–Leu-533 form a coiled coil.

The protein belongs to the BshC family.

This is Putative cysteine ligase BshC from Christiangramia forsetii (strain DSM 17595 / CGMCC 1.15422 / KT0803) (Gramella forsetii).